The following is a 522-amino-acid chain: Signal transduction histidine-protein kinase/phosphatase MprB (522 aa).

At 1–30 the chain is on the cytoplasmic side; that stretch reads MIRLYRPQRPPLRAPLRATPSLSLRWRVML. A helical membrane pass occupies residues 31–51; that stretch reads LAMSMVAMVVVLMAFAVYAVI. The Extracellular segment spans residues 52-167; sequence SAALYSDIDN…PTEAVMNKLR (116 aa). A helical membrane pass occupies residues 168–188; it reads WVLLIVGGVGVAVAAVAGGMV. The Cytoplasmic portion of the chain corresponds to 189–522; sequence TRAGLRPVAR…SVDSQSARAR (334 aa). One can recognise an HAMP domain in the interval 190–242; that stretch reads RAGLRPVARLTEAAERVARTDDLRPIPVFGSDELARLTESFNLMLRALAESRE. The Histidine kinase domain maps to 250–470; that stretch reads DAGHELRTPL…SFYVLLPGRS (221 aa). A Phosphohistidine; by autocatalysis modification is found at histidine 253. Positions 467 to 522 are disordered; sequence PGRSLPPAGHSTPAGESETDQAEAATDPAVPVAGDTANSRESANVISVDSQSARAR. Positions 502–522 are enriched in polar residues; that stretch reads TANSRESANVISVDSQSARAR.

The cofactor is Mg(2+). Requires Mn(2+) as cofactor. Autophosphorylated.

It localises to the cell membrane. The enzyme catalyses ATP + protein L-histidine = ADP + protein N-phospho-L-histidine.. Member of the two-component regulatory system MprB/MprA which contributes to maintaining a balance among several systems involved in stress resistance and is required for establishment and maintenance of persistent infection in the host. In response to environmental signals MprB acts both as a membrane-associated protein kinase that undergoes autophosphorylation and subsequently transfers the phosphate to MprA, and a protein phosphatase that dephosphorylates phospho-MprA. This Mycolicibacterium paratuberculosis (strain ATCC BAA-968 / K-10) (Mycobacterium paratuberculosis) protein is Signal transduction histidine-protein kinase/phosphatase MprB (mprB).